The primary structure comprises 647 residues: Starch synthase 1, chloroplastic/amyloplastic (647 aa).

A chloroplast-targeting transit peptide spans 1-41 (MAATGVGAGCLAPSVRLRADPATAARASACVVRARLRRVAR). Residues 66-91 (PLVPGFLAPPPPAPAQSPAPTQPPLP) are compositionally biased toward pro residues. A disordered region spans residues 66-95 (PLVPGFLAPPPPAPAQSPAPTQPPLPDAGV). Lysine 153 is an ADP-alpha-D-glucose binding site.

This sequence belongs to the glycosyltransferase 1 family. Bacterial/plant glycogen synthase subfamily.

The protein resides in the plastid. It localises to the chloroplast. It is found in the amyloplast. It carries out the reaction [(1-&gt;4)-alpha-D-glucosyl](n) + ADP-alpha-D-glucose = [(1-&gt;4)-alpha-D-glucosyl](n+1) + ADP + H(+). It participates in glycan biosynthesis; starch biosynthesis. The sequence is that of Starch synthase 1, chloroplastic/amyloplastic (WSSI-2) from Triticum aestivum (Wheat).